Reading from the N-terminus, the 273-residue chain is Putative phosphoenolpyruvate synthase regulatory protein (273 aa).

ADP is bound at residue 153–160; the sequence is AVSRAGKT.

Belongs to the pyruvate, phosphate/water dikinase regulatory protein family. PSRP subfamily.

It carries out the reaction [pyruvate, water dikinase] + ADP = [pyruvate, water dikinase]-phosphate + AMP + H(+). It catalyses the reaction [pyruvate, water dikinase]-phosphate + phosphate + H(+) = [pyruvate, water dikinase] + diphosphate. In terms of biological role, bifunctional serine/threonine kinase and phosphorylase involved in the regulation of the phosphoenolpyruvate synthase (PEPS) by catalyzing its phosphorylation/dephosphorylation. The polypeptide is Putative phosphoenolpyruvate synthase regulatory protein (Stenotrophomonas maltophilia (strain K279a)).